A 295-amino-acid chain; its full sequence is 4-hydroxy-tetrahydrodipicolinate synthase (295 aa).

Residue T46 participates in pyruvate binding. The active-site Proton donor/acceptor is the Y134. K162 functions as the Schiff-base intermediate with substrate in the catalytic mechanism. I205 provides a ligand contact to pyruvate.

Belongs to the DapA family. In terms of assembly, homotetramer; dimer of dimers.

Its subcellular location is the cytoplasm. The enzyme catalyses L-aspartate 4-semialdehyde + pyruvate = (2S,4S)-4-hydroxy-2,3,4,5-tetrahydrodipicolinate + H2O + H(+). Its pathway is amino-acid biosynthesis; L-lysine biosynthesis via DAP pathway; (S)-tetrahydrodipicolinate from L-aspartate: step 3/4. Its function is as follows. Catalyzes the condensation of (S)-aspartate-beta-semialdehyde [(S)-ASA] and pyruvate to 4-hydroxy-tetrahydrodipicolinate (HTPA). The polypeptide is 4-hydroxy-tetrahydrodipicolinate synthase (Anaeromyxobacter dehalogenans (strain 2CP-1 / ATCC BAA-258)).